Here is a 210-residue protein sequence, read N- to C-terminus: Chloramphenicol acetyltransferase (210 aa).

Residue His-79 is part of the active site.

This sequence belongs to the transferase hexapeptide repeat family.

The catalysed reaction is chloramphenicol + acetyl-CoA = chloramphenicol 3-acetate + CoA. This enzyme is an effector of chloramphenicol resistance in bacteria. This is Chloramphenicol acetyltransferase (catB2) from Escherichia coli.